A 187-amino-acid polypeptide reads, in one-letter code: Large ribosomal subunit protein uL5 (187 aa).

It belongs to the universal ribosomal protein uL5 family. As to quaternary structure, part of the 50S ribosomal subunit; part of the 5S rRNA/L5/L18/L25 subcomplex. Contacts the 5S rRNA and the P site tRNA. Forms a bridge to the 30S subunit in the 70S ribosome.

This is one of the proteins that bind and probably mediate the attachment of the 5S RNA into the large ribosomal subunit, where it forms part of the central protuberance. In the 70S ribosome it contacts protein S13 of the 30S subunit (bridge B1b), connecting the 2 subunits; this bridge is implicated in subunit movement. Contacts the P site tRNA; the 5S rRNA and some of its associated proteins might help stabilize positioning of ribosome-bound tRNAs. The protein is Large ribosomal subunit protein uL5 of Corynebacterium diphtheriae (strain ATCC 700971 / NCTC 13129 / Biotype gravis).